Consider the following 108-residue polypeptide: uncharacterized protein (108 aa).

This is an uncharacterized protein from Treponema pallidum (strain Nichols).